A 256-amino-acid chain; its full sequence is Phosphatidylglycerol--prolipoprotein diacylglyceryl transferase (256 aa).

A run of 3 helical transmembrane segments spans residues 19–39, 56–76, and 91–111; these read VHWYGLMYLIGFIGAWLLGYW, LIFYSALGVILGGRVGYMLFY, and IWEGGMSFHGGLLGVVIAAWL. Arg139 provides a ligand contact to a 1,2-diacyl-sn-glycero-3-phospho-(1'-sn-glycerol). The chain crosses the membrane as a helical span at residues 231-251; the sequence is FGWLTMGQVLSIPMLLIGIWL.

This sequence belongs to the Lgt family.

The protein localises to the cell inner membrane. It catalyses the reaction L-cysteinyl-[prolipoprotein] + a 1,2-diacyl-sn-glycero-3-phospho-(1'-sn-glycerol) = an S-1,2-diacyl-sn-glyceryl-L-cysteinyl-[prolipoprotein] + sn-glycerol 1-phosphate + H(+). Its pathway is protein modification; lipoprotein biosynthesis (diacylglyceryl transfer). Its function is as follows. Catalyzes the transfer of the diacylglyceryl group from phosphatidylglycerol to the sulfhydryl group of the N-terminal cysteine of a prolipoprotein, the first step in the formation of mature lipoproteins. In Legionella pneumophila (strain Paris), this protein is Phosphatidylglycerol--prolipoprotein diacylglyceryl transferase.